The sequence spans 216 residues: Methylthioribulose-1-phosphate dehydratase (216 aa).

2 residues coordinate Zn(2+): His-101 and His-103.

Belongs to the aldolase class II family. MtnB subfamily. Requires Zn(2+) as cofactor.

The enzyme catalyses 5-(methylsulfanyl)-D-ribulose 1-phosphate = 5-methylsulfanyl-2,3-dioxopentyl phosphate + H2O. It participates in amino-acid biosynthesis; L-methionine biosynthesis via salvage pathway; L-methionine from S-methyl-5-thio-alpha-D-ribose 1-phosphate: step 2/6. Catalyzes the dehydration of methylthioribulose-1-phosphate (MTRu-1-P) into 2,3-diketo-5-methylthiopentyl-1-phosphate (DK-MTP-1-P). In Bradyrhizobium sp. (strain BTAi1 / ATCC BAA-1182), this protein is Methylthioribulose-1-phosphate dehydratase.